Here is a 258-residue protein sequence, read N- to C-terminus: Phosphate import ATP-binding protein PstB 2 (258 aa).

An ABC transporter domain is found at 12–253 (IQVRDLNFYY…PQQKQTEDYI (242 aa)). Residue 44–51 (GPSGCGKS) coordinates ATP.

This sequence belongs to the ABC transporter superfamily. Phosphate importer (TC 3.A.1.7) family. In terms of assembly, the complex is composed of two ATP-binding proteins (PstB), two transmembrane proteins (PstC and PstA) and a solute-binding protein (PstS).

The protein localises to the cell inner membrane. The catalysed reaction is phosphate(out) + ATP + H2O = ADP + 2 phosphate(in) + H(+). Functionally, part of the ABC transporter complex PstSACB involved in phosphate import. Responsible for energy coupling to the transport system. This chain is Phosphate import ATP-binding protein PstB 2, found in Yersinia pestis bv. Antiqua (strain Nepal516).